A 473-amino-acid chain; its full sequence is Photosystem II CP43 reaction center protein (473 aa).

The propeptide occupies 1–14 (MKTLYSLRRYYPVE). Threonine 15 is modified (N-acetylthreonine). Threonine 15 bears the Phosphothreonine mark. 5 helical membrane passes run 69–93 (LFEV…PHLA), 134–155 (LIGP…KDKN), 178–200 (KASF…REIT), 255–275 (KPFA…LSYS), and 291–312 (WFNN…ASQA). Position 367 (glutamate 367) interacts with [CaMn4O5] cluster. A helical membrane pass occupies residues 447-471 (RARAAAAGFEKGIDRDSEPVLSMTP).

Belongs to the PsbB/PsbC family. PsbC subfamily. PSII is composed of 1 copy each of membrane proteins PsbA, PsbB, PsbC, PsbD, PsbE, PsbF, PsbH, PsbI, PsbJ, PsbK, PsbL, PsbM, PsbT, PsbX, PsbY, PsbZ, Psb30/Ycf12, at least 3 peripheral proteins of the oxygen-evolving complex and a large number of cofactors. It forms dimeric complexes. It depends on Binds multiple chlorophylls and provides some of the ligands for the Ca-4Mn-5O cluster of the oxygen-evolving complex. It may also provide a ligand for a Cl- that is required for oxygen evolution. PSII binds additional chlorophylls, carotenoids and specific lipids. as a cofactor.

It is found in the plastid. Its subcellular location is the chloroplast thylakoid membrane. In terms of biological role, one of the components of the core complex of photosystem II (PSII). It binds chlorophyll and helps catalyze the primary light-induced photochemical processes of PSII. PSII is a light-driven water:plastoquinone oxidoreductase, using light energy to abstract electrons from H(2)O, generating O(2) and a proton gradient subsequently used for ATP formation. In Anthoceros angustus (Hornwort), this protein is Photosystem II CP43 reaction center protein.